The chain runs to 284 residues: MFAIIGPTASGKSDLAIKLALKLNYEILSLDSLSIYKEIDIASAKPSKEELSKVKHYGVNEIYPNEKFDVMKFIEIYKKIPHKNIIIVGGTGFYLKAMLEGISQMPEITDEIKKKAKQKDYAFFESVDPDFASKISPNDTYRIQKGLEIYFATKTPPSVYFKNNPPKPVLPDIPIFEIAVDRSVLRERIKKRTDKMFNSGLIDEVAYLEKKYRDRRLPALKAIGIKEVLDYFNGKYTLKTLKEKIITNTARLAKRQQTFNKTQFKKKISAPLEELEEIILSEIK.

6–13 (GPTASGKS) is an ATP binding site. 8–13 (TASGKS) provides a ligand contact to substrate. The interaction with substrate tRNA stretch occupies residues 31 to 34 (DSLS).

The protein belongs to the IPP transferase family. Monomer. Requires Mg(2+) as cofactor.

It catalyses the reaction adenosine(37) in tRNA + dimethylallyl diphosphate = N(6)-dimethylallyladenosine(37) in tRNA + diphosphate. In terms of biological role, catalyzes the transfer of a dimethylallyl group onto the adenine at position 37 in tRNAs that read codons beginning with uridine, leading to the formation of N6-(dimethylallyl)adenosine (i(6)A). The polypeptide is tRNA dimethylallyltransferase (Nautilia profundicola (strain ATCC BAA-1463 / DSM 18972 / AmH)).